The primary structure comprises 1129 residues: MFRRTLNRLCAGEEKRVGTRTVFVGNHPISGTEPYIAQRFCDNRIVSSKYTLWNFLPKNLFEQFRRIANFYFLIIFLVQVTVDTPTSPVTSGLPLFFVITVTAIKQGYEDWLRHRADNEVNKSAVYIIENAKRVRKESEKIKVGDVVEVQANETFPCDLILLSSCTTDGTCYVTTASLDGESNCKTHYAVRDTIALCTAESIDNLRATIECEQPQPDLYRFVGRISIYSNSIEAVARSLGPENLLLKGATLKNTKKIYGVAVYTGMETKMALNYQGKSQKCSAVEKSINAFLIVYLFILLTKAAVCTTLKYVWQSSPYNDEPWYNQKTQKERETFQVLKMFTDFLSFMVLFNFIIPVSMYVTVEMQKFLGSFFISWDKDFFDEEINEGALVNTSDLNEELGQVDYVFTDKTGTLTENSMEFIECCIDGHKYKGTTQEVDGLSQTDGPLAYFDKADKNREALFLRALCLCHTVEMKTNDDVDGPVEGAGFTYISSSPDEIALVKGAKRFGFTFLGNQNGYIRVENQRKEIEEYELLHTLNFDSVRRRMSVIVRTQKGDILLFCKGADSSIFPRVHSHQIELTKDHVERNAMDGYRTLCVAFKEIPPDDFERINAQLVEAKMALQDREEKLEKVFDEIETNMNLIGATAVEDKLQDQAAETIEALHAAGLKVWVLTGDKMETAKSTCYACRLFQTNTELLELTTKTIEESERKEDRLHELLIEYRKKLLHEFPKSTRSLKKAWTEHQEYGLIIDGSTLSLILNSSQDCSSNNYKSIFLQICMKCTAVLCCRMAPLQKAQIVRMVKNLKGSPITLSIGDGANDVSMILESHVGIGIKGKEGRQAARNSDYSVPKFKHLKKLLLVHGHLYYVRIAHLVQYFFYKNLCFILPQFLYQFFCGFSQQPLYDAAYLTMYNICFTSLPILAYSLLEQHINIDTLTADPRLYMKITGNAMLQLGPFLHWTFLAAFEGTVFFFGTYFLFQTSSLEDNGKIYGNWTFGTIVFTVLVFTVTLKLALDTRFWTWINHFVIWGSLAFYVFFSFFWGGIIWPFLKQQRMYFVFAQMLCSVSTWLAIILLIFISLFPEILLIVVKNVRRRSARRNLSCRRASDSLSARPSVRPLLLRTFSDESNIL.

Over 1–83 (MFRRTLNRLC…IIFLVQVTVD (83 aa)) the chain is Cytoplasmic. A helical membrane pass occupies residues 84 to 104 (TPTSPVTSGLPLFFVITVTAI). At 105–287 (KQGYEDWLRH…SQKCSAVEKS (183 aa)) the chain is on the extracellular side. A helical membrane pass occupies residues 288 to 308 (INAFLIVYLFILLTKAAVCTT). The Cytoplasmic portion of the chain corresponds to 309–343 (LKYVWQSSPYNDEPWYNQKTQKERETFQVLKMFTD). The helical transmembrane segment at 344–364 (FLSFMVLFNFIIPVSMYVTVE) threads the bilayer. The Extracellular portion of the chain corresponds to 365 to 876 (MQKFLGSFFI…YVRIAHLVQY (512 aa)). The 4-aspartylphosphate intermediate role is filled by Asp-409. Residues Asp-409, Lys-410, and Thr-411 each coordinate ATP. Residue Asp-409 participates in Mg(2+) binding. Residue Thr-411 participates in Mg(2+) binding. Ser-442 is subject to Phosphoserine. Glu-498, Phe-540, Lys-563, and Arg-594 together coordinate ATP. A coiled-coil region spans residues 607–643 (DFERINAQLVEAKMALQDREEKLEKVFDEIETNMNLI). Residues Thr-674, Gly-675, and Asp-676 each contribute to the ATP site. Positions 695 to 726 (TELLELTTKTIEESERKEDRLHELLIEYRKKL) form a coiled coil. Residues Arg-789 and Lys-795 each coordinate ATP. Asp-816 provides a ligand contact to Mg(2+). Residues Asn-819 and Asp-820 each contribute to the ATP site. Asp-820 is a binding site for Mg(2+). A helical transmembrane segment spans residues 877–897 (FFYKNLCFILPQFLYQFFCGF). At 898–905 (SQQPLYDA) the chain is on the cytoplasmic side. A helical transmembrane segment spans residues 906 to 926 (AYLTMYNICFTSLPILAYSLL). The Extracellular segment spans residues 927–952 (EQHINIDTLTADPRLYMKITGNAMLQ). The chain crosses the membrane as a helical span at residues 953 to 973 (LGPFLHWTFLAAFEGTVFFFG). Over 974-988 (TYFLFQTSSLEDNGK) the chain is Cytoplasmic. The helical transmembrane segment at 989–1009 (IYGNWTFGTIVFTVLVFTVTL) threads the bilayer. Topologically, residues 1010-1023 (KLALDTRFWTWINH) are extracellular. A helical membrane pass occupies residues 1024–1044 (FVIWGSLAFYVFFSFFWGGII). The Cytoplasmic segment spans residues 1045 to 1066 (WPFLKQQRMYFVFAQMLCSVST). A helical membrane pass occupies residues 1067 to 1087 (WLAIILLIFISLFPEILLIVV). Residues 1088 to 1129 (KNVRRRSARRNLSCRRASDSLSARPSVRPLLLRTFSDESNIL) lie on the Extracellular side of the membrane. Ser-1105, Ser-1113, and Ser-1123 each carry phosphoserine. Positions 1113–1118 (SVRPLL) match the Di-leucine motif motif.

Belongs to the cation transport ATPase (P-type) (TC 3.A.3) family. Type IV subfamily. As to quaternary structure, component of a P4-ATPase flippase complex which consists of a catalytic alpha subunit ATP11C and an accessory beta subunit TMEM30A. It depends on Mg(2+) as a cofactor. Proteolytically cleaved by CASP3, CASP6 and CASP7. Post-translationally, phosphorylated at Ser-1113 likely by PRKCA; this creates a functional di-leucine motif that is sufficient for endocytosis. In terms of tissue distribution, widely expressed. Expressed in retina, brain, liver and testes (at protein level). Expressed in lung, bone marrow, lymph nodes, prostate, ovary and uterus. Expressed in fetus.

It is found in the cell membrane. The protein resides in the endoplasmic reticulum membrane. The protein localises to the early endosome membrane. It localises to the recycling endosome membrane. The enzyme catalyses ATP + H2O + phospholipidSide 1 = ADP + phosphate + phospholipidSide 2.. The catalysed reaction is a 1,2-diacyl-sn-glycero-3-phospho-L-serine(out) + ATP + H2O = a 1,2-diacyl-sn-glycero-3-phospho-L-serine(in) + ADP + phosphate + H(+). It catalyses the reaction a 1,2-diacyl-sn-glycero-3-phosphoethanolamine(out) + ATP + H2O = a 1,2-diacyl-sn-glycero-3-phosphoethanolamine(in) + ADP + phosphate + H(+). Catalytic component of a P4-ATPase flippase complex which catalyzes the hydrolysis of ATP coupled to the transport of aminophospholipids, phosphatidylserines (PS) and phosphatidylethanolamines (PE), from the outer to the inner leaflet of the plasma membrane. Major PS-flippase in immune cell subsets. In erythrocyte plasma membrane, it is required to maintain PS in the inner leaflet preventing its exposure on the surface. This asymmetric distribution is critical for the survival of erythrocytes in circulation since externalized PS is a phagocytic signal for erythrocyte clearance by splenic macrophages. Required for B cell differentiation past the pro-B cell stage. Seems to mediate PS flipping in pro-B cells. May be involved in the transport of cholestatic bile acids. The sequence is that of Phospholipid-transporting ATPase 11C from Mus musculus (Mouse).